The following is a 267-amino-acid chain: MTNQNVLLNISGVKFVLRIPNAVNLSLINREYEAFNNAQAYRAGLNVETPVLDAKSGVKLTRYLENSNTLSQIQLNEQSCLSQVVNNLYRLHNSEFVFRNVFSVFDEFRQYFSLLENKSAFYQADSRMDKLSAVFWQFEEINKEVILRPCHNDLVPENMLLQDDRLFFIDWEYSGLNDPLFDIATIIEEAHLSKEAADFLLETYCNQTNKYHKTEFQIAHKRLKIHRFCQNVLWFLWTKVKEEHGENFGDYALKRLDAAFKLLEELP.

This sequence belongs to the peptidase S49 family.

Its function is as follows. Mediates phase variation of the LPS epitopes. Phase variation of H.influenza LPS epitopes expressed by LicA is determined by a translational switch. The polypeptide is Protein LicA (licA) (Haemophilus influenzae (strain ATCC 51907 / DSM 11121 / KW20 / Rd)).